The sequence spans 852 residues: Elongation factor 2 (852 aa).

One can recognise a tr-type G domain in the interval 17-356 (RNIRNMSVIA…MIAFHLPSPV (340 aa)). 26-33 (AHVDHGKS) contacts GTP. Phosphothreonine occurs at positions 57 and 59. Residues 170 to 173 (NKMD) and 227 to 229 (SGL) contribute to the GTP site. A Diphthamide modification is found at histidine 709.

This sequence belongs to the TRAFAC class translation factor GTPase superfamily. Classic translation factor GTPase family. EF-G/EF-2 subfamily. In terms of processing, phosphorylation by EF-2 kinase completely inactivates EF-2. AMPylated by fic-1.

It is found in the cytoplasm. It catalyses the reaction GTP + H2O = GDP + phosphate + H(+). Functionally, catalyzes the GTP-dependent ribosomal translocation step during translation elongation. During this step, the ribosome changes from the pre-translocational (PRE) to the post-translocational (POST) state as the newly formed A-site-bound peptidyl-tRNA and P-site-bound deacylated tRNA move to the P and E sites, respectively. Catalyzes the coordinated movement of the two tRNA molecules, the mRNA and conformational changes in the ribosome. Involved in the morphogenesis of epidermal tissues. The chain is Elongation factor 2 (eef-2) from Caenorhabditis elegans.